Here is a 113-residue protein sequence, read N- to C-terminus: Cell cycle control protein 50C (113 aa).

Residues 1–34 (MEERAQHCLSRLLDNSALKQQELPIHRLYFTARR) are Cytoplasmic-facing. A helical membrane pass occupies residues 35–55 (VLFVFFATGIFCLCMGIILIL). At 56-113 (SARSTQEIEINYTRICANCAKLRENASNFDKECTCSIPFYLSGKMMVGEIQETRLTLH) the chain is on the extracellular side. N-linked (GlcNAc...) asparagine glycosylation is present at N66.

The protein belongs to the CDC50/LEM3 family. In terms of tissue distribution, specifically expressed in testis.

Its subcellular location is the membrane. This is Cell cycle control protein 50C from Homo sapiens (Human).